Reading from the N-terminus, the 230-residue chain is Somatolactin (230 aa).

The N-terminal stretch at 1-23 is a signal peptide; it reads MMTAVKQSGVWAVLLWPYLLAVS. Intrachain disulfides connect cysteine 28-cysteine 38, cysteine 88-cysteine 204, and cysteine 221-cysteine 229. N-linked (GlcNAc...) asparagine glycosylation is found at asparagine 34 and asparagine 144.

Belongs to the somatotropin/prolactin family. As to expression, pituitary gland.

It localises to the secreted. In Solea senegalensis (Senegalese sole), this protein is Somatolactin.